Here is a 523-residue protein sequence, read N- to C-terminus: MCVPSRVIICLLRNDLRLHDNEVLHWAHRNADQIVPLYCFDPRHYVGTHYFNFPKTGPHRLKFLLESVRDLRITLKKKGSNLLLRRGKPEEVIEDLVKQLGNVSAVTLHEEATKEETDVESAVKQACTRLGIKYQTFWGSTLYHREDLPFRHISSLPDVYTQFRKAVETQGKVRPTFQMPDKLKPLPSGLEEGSVPSHEDFDQQDPLTDPRTAFPCSGGESQALQRLEHYFWETNLVASYKDTRNGLIGLDYSTKFAPWLALGCVSPRYIYEQIGKYEKERTANQSTYWVIFELLWRDYFRFVALKYGRRIFFLRGLQDKDIPWKRDPKLFDAWKEGRTGVPFVDANMRELAMTGFMSNRGRQNVASFLTKDLGIDWRMGAEWFEYLLVDYDVCSNYGNWLYSAGIGNDPRENRKFNMIKQGLDYDSGGDYIRLWVPELQQIKGGDAHTPWALSNASLAHANLSLGETYPYPIVMAPEWSRHINQKPAGSWEKSARRGKGPSHTPKQHKNRGIDFYFSRNKDV.

The Photolyase/cryptochrome alpha/beta domain maps to 6-142 (RVIICLLRND…KYQTFWGSTL (137 aa)). Disordered regions lie at residues 174-211 (RPTFQMPDKLKPLPSGLEEGSVPSHEDFDQQDPLTDPR) and 486-523 (KPAGSWEKSARRGKGPSHTPKQHKNRGIDFYFSRNKDV). The segment covering 496–510 (RRGKGPSHTPKQHKN) has biased composition (basic residues).

It belongs to the DNA photolyase class-1 family. The cofactor is FAD. Requires (6R)-5,10-methylene-5,6,7,8-tetrahydrofolate as cofactor.

May have a photoreceptor function. Has weak cyclobutyl pyrimidine photolyase activity when expressed in E.coli and when tested in vitro. This Xenopus laevis (African clawed frog) protein is Cryptochrome DASH (cry-dash).